Reading from the N-terminus, the 312-residue chain is Homoserine kinase (312 aa).

Residue 94-104 (PLGRGLGSSAA) coordinates ATP.

Belongs to the GHMP kinase family. Homoserine kinase subfamily.

It is found in the cytoplasm. It carries out the reaction L-homoserine + ATP = O-phospho-L-homoserine + ADP + H(+). It functions in the pathway amino-acid biosynthesis; L-threonine biosynthesis; L-threonine from L-aspartate: step 4/5. Functionally, catalyzes the ATP-dependent phosphorylation of L-homoserine to L-homoserine phosphate. This Caldanaerobacter subterraneus subsp. tengcongensis (strain DSM 15242 / JCM 11007 / NBRC 100824 / MB4) (Thermoanaerobacter tengcongensis) protein is Homoserine kinase.